The following is a 223-amino-acid chain: SCMKAAPMKEVSIRGQGSLAYPGLRTQGNLETLGGPNDATRGLTSLADTFEHVIEELLDEQQAIQPSKENKDADLYSTRVMLSSQVPLEPPLLFLLEEYKNYLDAANMSMRVRRHSDPARRGELSVCDSTSEWVTAAEKKTAVDMSGATVTVLEKVPVPKGQLKQYFYETKCSSKGYAKEGCRGIDKRYWNSQCRTTQSFVRALTMDNKKRVGWRFIRIDTSC.

The first 5 residues, 1–5 (SCMKA), serve as a signal peptide directing secretion. Positions 6–114 (APMKEVSIRG…AANMSMRVRR (109 aa)) are excised as a propeptide. Asn-107 is a glycosylation site (N-linked (GlcNAc...) asparagine). 2 disulfide bridges follow: Cys-127/Cys-194 and Cys-172/Cys-223.

It belongs to the NGF-beta family.

The protein localises to the secreted. Functionally, promotes the survival of neuronal populations that are all located either in the central nervous system or directly connected to it. The chain is Neurotrophic factor BDNF precursor form (BDNF) from Eryx colubrinus colubrinus.